The sequence spans 557 residues: MKSDIEIAQDTKELPITEIAKKVDLQPDEIELYGNDKAKISWKGINRIKQGKKLGKLILVTSISPTPAGEGKSTITIGLGDAISNQLHKNTLIALREPSMGPVFGLKGGATGGGYAQIITMEDINLHFTGDMHALTSAIDTLAALVDNYIYQDNSLELDPNRILLKRGIDVNDRTLRKITIGQGSRFNGIEHEASFAITVANELMAILCLATDIDDLKKRIGNMLVGFSVKDEPVYVKDLGFEGAIAALLSTALKPNLVQTLEHTPAIVHGGPFANIAHGANSVIATNTALHLSDYVLTEAGFGADLGGQKFMDFVSNHLDKRPDAVVVVATVRALKYQAEETTDHLDEENIPALEKGFENLKRHMENMAHYGVPVIVLINKFASDTEQELSKLKELVKADGFECEVVSYHDEGSKGGIKAAEKVVELTNKASDFTSVYEPTDSVEEKISKIAHNIYHAKDIEYSDKAKDQLAEIKKMGKDNLPVIMAKTQYSFTDKKSILGAPKDFTLHVKNLALKNGAGFIVVATGSILDMPGLPKYPAALDIDVDNNGKISGLF.

Threonine 66–serine 73 contributes to the ATP binding site.

The protein belongs to the formate--tetrahydrofolate ligase family.

It catalyses the reaction (6S)-5,6,7,8-tetrahydrofolate + formate + ATP = (6R)-10-formyltetrahydrofolate + ADP + phosphate. It participates in one-carbon metabolism; tetrahydrofolate interconversion. This is Formate--tetrahydrofolate ligase from Lactobacillus johnsonii (strain CNCM I-12250 / La1 / NCC 533).